The following is a 360-amino-acid chain: Sorbitol dehydrogenase (360 aa).

C42 serves as a coordination point for Zn(2+). Y48 contributes to the substrate binding site. The Zn(2+) site is built by H67 and E68. Position 153 (E153) interacts with substrate. NAD(+)-binding positions include D201, R206, 277–279 (AGN), and 301–303 (SFR). 2 residues coordinate substrate: R303 and Y304.

It belongs to the zinc-containing alcohol dehydrogenase family. In terms of assembly, homotetramer. The cofactor is Zn(2+).

The enzyme catalyses keto-D-fructose + NADH + H(+) = D-sorbitol + NAD(+). In terms of biological role, polyol dehydrogenase that catalyzes the reversible NAD(+)-dependent oxidation of various sugar alcohols. Is active with D-sorbitol (D-glucitol) as substrate, leading to the C2-oxidized product D-fructose. Suppresses growth arrest induced by a p53 tumor mutant in fission yeast. In Schizosaccharomyces pombe (strain 972 / ATCC 24843) (Fission yeast), this protein is Sorbitol dehydrogenase (tms1).